Consider the following 269-residue polypeptide: Formamidopyrimidine-DNA glycosylase (269 aa).

P2 acts as the Schiff-base intermediate with DNA in catalysis. The active-site Proton donor is the E3. K57 (proton donor; for beta-elimination activity) is an active-site residue. DNA-binding residues include H90, R109, and K150. The FPG-type zinc-finger motif lies at 235–269 (QVYGRHGEPCYTCGEFIQIAKYGQRSSFFCPSCQN). Catalysis depends on R259, which acts as the Proton donor; for delta-elimination activity.

It belongs to the FPG family. As to quaternary structure, monomer. It depends on Zn(2+) as a cofactor.

It catalyses the reaction Hydrolysis of DNA containing ring-opened 7-methylguanine residues, releasing 2,6-diamino-4-hydroxy-5-(N-methyl)formamidopyrimidine.. It carries out the reaction 2'-deoxyribonucleotide-(2'-deoxyribose 5'-phosphate)-2'-deoxyribonucleotide-DNA = a 3'-end 2'-deoxyribonucleotide-(2,3-dehydro-2,3-deoxyribose 5'-phosphate)-DNA + a 5'-end 5'-phospho-2'-deoxyribonucleoside-DNA + H(+). Its function is as follows. Involved in base excision repair of DNA damaged by oxidation or by mutagenic agents. Acts as a DNA glycosylase that recognizes and removes damaged bases. Has a preference for oxidized purines, such as 7,8-dihydro-8-oxoguanine (8-oxoG). Has AP (apurinic/apyrimidinic) lyase activity and introduces nicks in the DNA strand. Cleaves the DNA backbone by beta-delta elimination to generate a single-strand break at the site of the removed base with both 3'- and 5'-phosphates. This Baumannia cicadellinicola subsp. Homalodisca coagulata protein is Formamidopyrimidine-DNA glycosylase.